We begin with the raw amino-acid sequence, 186 residues long: MSGAHRLIILVAGMPGSGKSVLSSIARSMGIPVYVMGDIVREEARRRGIEPTPENLNRLARLLREEHGSTVVAERTASKIASDDHSIVLVDGVRSLDEVAVFEKLGKTVIVAVHASPRTRFERIRRRGRPGDPTTWEEFRQRDLTELGFGLGNVIALADYMLVNELSLEEFEAEAKRLLSRLTGQG.

13–20 (GMPGSGKS) lines the ATP pocket.

Belongs to the UPF0200 family.

This is UPF0200 protein Hbut_0338 from Hyperthermus butylicus (strain DSM 5456 / JCM 9403 / PLM1-5).